Consider the following 548-residue polypeptide: ATP synthase subunit alpha (548 aa).

172–179 (GDRKTGKT) is an ATP binding site. The disordered stretch occupies residues 510-548 (QFTTSSGESAAPSEPEAEALAADEVGQETVKVNRPAPKK). Low complexity predominate over residues 514 to 531 (SSGESAAPSEPEAEALAA).

Belongs to the ATPase alpha/beta chains family. In terms of assembly, F-type ATPases have 2 components, CF(1) - the catalytic core - and CF(0) - the membrane proton channel. CF(1) has five subunits: alpha(3), beta(3), gamma(1), delta(1), epsilon(1). CF(0) has three main subunits: a(1), b(2) and c(9-12). The alpha and beta chains form an alternating ring which encloses part of the gamma chain. CF(1) is attached to CF(0) by a central stalk formed by the gamma and epsilon chains, while a peripheral stalk is formed by the delta and b chains.

The protein resides in the cell membrane. The catalysed reaction is ATP + H2O + 4 H(+)(in) = ADP + phosphate + 5 H(+)(out). Functionally, produces ATP from ADP in the presence of a proton gradient across the membrane. The alpha chain is a regulatory subunit. This is ATP synthase subunit alpha from Saccharopolyspora erythraea (strain ATCC 11635 / DSM 40517 / JCM 4748 / NBRC 13426 / NCIMB 8594 / NRRL 2338).